The chain runs to 266 residues: Putative carbamate hydrolase RutD (266 aa).

It belongs to the AB hydrolase superfamily. Hydrolase RutD family.

The enzyme catalyses carbamate + 2 H(+) = NH4(+) + CO2. Its function is as follows. Involved in pyrimidine catabolism. May facilitate the hydrolysis of carbamate, a reaction that can also occur spontaneously. The chain is Putative carbamate hydrolase RutD from Escherichia coli O150:H5 (strain SE15).